Reading from the N-terminus, the 237-residue chain is NAD-dependent protein deacetylase (237 aa).

The 237-residue stretch at 1–237 (MLTTWLTEAK…LEETNRALQA (237 aa)) folds into the Deacetylase sirtuin-type domain. 7 residues coordinate NAD(+): A18, T22, F29, R30, Q95, D98, and H113. F29 lines the nicotinamide pocket. Residue D98 participates in nicotinamide binding. H113 serves as the catalytic Proton acceptor. C121, C124, C140, and C142 together coordinate Zn(2+). Residues S180, S181, N205, and I224 each coordinate NAD(+).

The protein belongs to the sirtuin family. Class U subfamily. Zn(2+) is required as a cofactor.

The protein resides in the cytoplasm. The enzyme catalyses N(6)-acetyl-L-lysyl-[protein] + NAD(+) + H2O = 2''-O-acetyl-ADP-D-ribose + nicotinamide + L-lysyl-[protein]. NAD-dependent protein deacetylase which modulates the activities of several enzymes which are inactive in their acetylated form. This is NAD-dependent protein deacetylase from Halalkalibacterium halodurans (strain ATCC BAA-125 / DSM 18197 / FERM 7344 / JCM 9153 / C-125) (Bacillus halodurans).